The primary structure comprises 141 residues: Large ribosomal subunit protein uL13 (141 aa).

The protein belongs to the universal ribosomal protein uL13 family. In terms of assembly, part of the 50S ribosomal subunit.

Its function is as follows. This protein is one of the early assembly proteins of the 50S ribosomal subunit, although it is not seen to bind rRNA by itself. It is important during the early stages of 50S assembly. This is Large ribosomal subunit protein uL13 from Helicobacter acinonychis (strain Sheeba).